The chain runs to 454 residues: CCA-adding enzyme (454 aa).

2 residues coordinate ATP: serine 59 and arginine 62. Serine 59 and arginine 62 together coordinate CTP. Residues aspartate 71, aspartate 73, and aspartate 125 each coordinate Mg(2+). Positions 148, 167, and 176 each coordinate ATP. CTP-binding residues include histidine 148, lysine 167, and tyrosine 176.

It belongs to the tRNA nucleotidyltransferase/poly(A) polymerase family. Archaeal CCA-adding enzyme subfamily. In terms of assembly, homodimer. It depends on Mg(2+) as a cofactor.

The catalysed reaction is a tRNA precursor + 2 CTP + ATP = a tRNA with a 3' CCA end + 3 diphosphate. The enzyme catalyses a tRNA with a 3' CCA end + 2 CTP + ATP = a tRNA with a 3' CCACCA end + 3 diphosphate. Catalyzes the addition and repair of the essential 3'-terminal CCA sequence in tRNAs without using a nucleic acid template. Adds these three nucleotides in the order of C, C, and A to the tRNA nucleotide-73, using CTP and ATP as substrates and producing inorganic pyrophosphate. tRNA 3'-terminal CCA addition is required both for tRNA processing and repair. Also involved in tRNA surveillance by mediating tandem CCA addition to generate a CCACCA at the 3' terminus of unstable tRNAs. While stable tRNAs receive only 3'-terminal CCA, unstable tRNAs are marked with CCACCA and rapidly degraded. This Methanosarcina mazei (strain ATCC BAA-159 / DSM 3647 / Goe1 / Go1 / JCM 11833 / OCM 88) (Methanosarcina frisia) protein is CCA-adding enzyme.